Consider the following 24-residue polypeptide: SHGKQETDEEFDARWVTYFNKSDI.

It belongs to the cytochrome c oxidase subunit 5A family. As to quaternary structure, component of the cytochrome c oxidase (complex IV, CIV), a multisubunit enzyme composed of 14 subunits. The complex is composed of a catalytic core of 3 subunits MT-CO1, MT-CO2 and MT-CO3, encoded in the mitochondrial DNA, and 11 supernumerary subunits COX4I, COX5A, COX5B, COX6A, COX6B, COX6C, COX7A, COX7B, COX7C, COX8 and NDUFA4, which are encoded in the nuclear genome. The complex exists as a monomer or a dimer and forms supercomplexes (SCs) in the inner mitochondrial membrane with NADH-ubiquinone oxidoreductase (complex I, CI) and ubiquinol-cytochrome c oxidoreductase (cytochrome b-c1 complex, complex III, CIII), resulting in different assemblies (supercomplex SCI(1)III(2)IV(1) and megacomplex MCI(2)III(2)IV(2)).

The protein resides in the mitochondrion inner membrane. Its pathway is energy metabolism; oxidative phosphorylation. Component of the cytochrome c oxidase, the last enzyme in the mitochondrial electron transport chain which drives oxidative phosphorylation. The respiratory chain contains 3 multisubunit complexes succinate dehydrogenase (complex II, CII), ubiquinol-cytochrome c oxidoreductase (cytochrome b-c1 complex, complex III, CIII) and cytochrome c oxidase (complex IV, CIV), that cooperate to transfer electrons derived from NADH and succinate to molecular oxygen, creating an electrochemical gradient over the inner membrane that drives transmembrane transport and the ATP synthase. Cytochrome c oxidase is the component of the respiratory chain that catalyzes the reduction of oxygen to water. Electrons originating from reduced cytochrome c in the intermembrane space (IMS) are transferred via the dinuclear copper A center (CU(A)) of subunit 2 and heme A of subunit 1 to the active site in subunit 1, a binuclear center (BNC) formed by heme A3 and copper B (CU(B)). The BNC reduces molecular oxygen to 2 water molecules using 4 electrons from cytochrome c in the IMS and 4 protons from the mitochondrial matrix. The chain is Cytochrome c oxidase subunit 5A-2, mitochondrial from Thunnus obesus (Bigeye tuna).